Reading from the N-terminus, the 518-residue chain is MRKINFFDTTLRDGEQSPGVNLNTQEKLAIAQQLEKLGVNIMEAGFPASSPGDFNAVKEIARTIKNCSVTGLARSVKGDIDSAWEALKDGAEPRLHIFIATSDIHLKYKLKKTREQVLEQAVAMVKYAKERFPIVQWSAEDACRTDLPFLAEIVSEVIAAGADVVNLPDTVGYLAPAEYGNIFRYIKENARNADKVQLSAHCHDDLGMAVANSLAAIENGADQVESVINGIGERAGNASLEEIAVALHIRKDFYQAESTIQLNEIKRTSDLVSKLTGMAVPRNKAVVGDNAFAHESGIHQDGFLKEKTTYEIISPELVGVKTDALVLGKHSGRHAFKDKLQNLGFQLGEEEINKFFNIFKELTGKKKEFTDEDLISLILEEKTADRKIGYDFISLQVHYGTSQVPTATVSLKDQETDQVIQEAATGAGSVEAVYNTLKRCMDKEVQLLDYRIQSNRKGQDAFAQVYVRVMIDGKESGGRGVAQDVLEASAKAYLNAVNRYLVLKTNTEGLSKQAAVGS.

One can recognise a Pyruvate carboxyltransferase domain in the interval 4-266; the sequence is INFFDTTLRD…ESTIQLNEIK (263 aa). Mn(2+)-binding residues include aspartate 13, histidine 201, histidine 203, and asparagine 237. Residues 391-518 form a regulatory domain region; that stretch reads DFISLQVHYG…GLSKQAAVGS (128 aa).

The protein belongs to the alpha-IPM synthase/homocitrate synthase family. LeuA type 1 subfamily. In terms of assembly, homodimer. Mn(2+) is required as a cofactor.

It localises to the cytoplasm. It carries out the reaction 3-methyl-2-oxobutanoate + acetyl-CoA + H2O = (2S)-2-isopropylmalate + CoA + H(+). It participates in amino-acid biosynthesis; L-leucine biosynthesis; L-leucine from 3-methyl-2-oxobutanoate: step 1/4. Functionally, catalyzes the condensation of the acetyl group of acetyl-CoA with 3-methyl-2-oxobutanoate (2-ketoisovalerate) to form 3-carboxy-3-hydroxy-4-methylpentanoate (2-isopropylmalate). The sequence is that of 2-isopropylmalate synthase from Bacillus licheniformis (strain ATCC 14580 / DSM 13 / JCM 2505 / CCUG 7422 / NBRC 12200 / NCIMB 9375 / NCTC 10341 / NRRL NRS-1264 / Gibson 46).